The following is a 339-amino-acid chain: Uroporphyrinogen decarboxylase (339 aa).

Substrate-binding positions include Arg-21 to Arg-25, Asp-71, Tyr-147, Ser-202, and His-315.

This sequence belongs to the uroporphyrinogen decarboxylase family. In terms of assembly, homodimer.

Its subcellular location is the cytoplasm. It carries out the reaction uroporphyrinogen III + 4 H(+) = coproporphyrinogen III + 4 CO2. It functions in the pathway porphyrin-containing compound metabolism; protoporphyrin-IX biosynthesis; coproporphyrinogen-III from 5-aminolevulinate: step 4/4. Catalyzes the decarboxylation of four acetate groups of uroporphyrinogen-III to yield coproporphyrinogen-III. This is Uroporphyrinogen decarboxylase from Helicobacter pylori (strain HPAG1).